Here is a 149-residue protein sequence, read N- to C-terminus: D-aminoacyl-tRNA deacylase (149 aa).

Positions 137 to 138 (GP) match the Gly-cisPro motif, important for rejection of L-amino acids motif.

It belongs to the DTD family. Homodimer.

The protein resides in the cytoplasm. It carries out the reaction glycyl-tRNA(Ala) + H2O = tRNA(Ala) + glycine + H(+). It catalyses the reaction a D-aminoacyl-tRNA + H2O = a tRNA + a D-alpha-amino acid + H(+). Its function is as follows. An aminoacyl-tRNA editing enzyme that deacylates mischarged D-aminoacyl-tRNAs. Also deacylates mischarged glycyl-tRNA(Ala), protecting cells against glycine mischarging by AlaRS. Acts via tRNA-based rather than protein-based catalysis; rejects L-amino acids rather than detecting D-amino acids in the active site. By recycling D-aminoacyl-tRNA to D-amino acids and free tRNA molecules, this enzyme counteracts the toxicity associated with the formation of D-aminoacyl-tRNA entities in vivo and helps enforce protein L-homochirality. The polypeptide is D-aminoacyl-tRNA deacylase (Pediococcus pentosaceus (strain ATCC 25745 / CCUG 21536 / LMG 10740 / 183-1w)).